The chain runs to 93 residues: YcgL domain-containing protein Ssed_2518 (93 aa).

The YcgL domain occupies Met-1–Lys-85.

The chain is YcgL domain-containing protein Ssed_2518 from Shewanella sediminis (strain HAW-EB3).